The primary structure comprises 872 residues: Probable LRR receptor-like serine/threonine-protein kinase At1g51880 (872 aa).

Residues 1-23 form the signal peptide; that stretch reads MKSIHGFLLFLITAYVILESVQA. Residues 24 to 513 lie on the Extracellular side of the membrane; the sequence is QDQLGFISLD…GKSKKVPMIP (490 aa). 9 N-linked (GlcNAc...) asparagine glycosylation sites follow: Asn-40, Asn-49, Asn-96, Asn-181, Asn-255, Asn-268, Asn-294, Asn-339, and Asn-401. LRR repeat units follow at residues 411 to 434, 435 to 457, and 459 to 482; these read RIIS…SKLT, QLIE…FADM, and LLKL…IQQR. N-linked (GlcNAc...) asparagine glycosylation is found at Asn-464 and Asn-472. Residues 514 to 534 form a helical membrane-spanning segment; the sequence is IVASVAGVFALLVILAIFFVV. At 535–872 the chain is on the cytoplasmic side; the sequence is RRKNGESNKG…SASEFSPGAR (338 aa). Thr-557 is subject to Phosphothreonine. Positions 566-838 constitute a Protein kinase domain; the sequence is NNFERVLGKG…HVVTELNECV (273 aa). ATP-binding positions include 572–580 and Lys-593; that span reads LGKGGFGTV. A Phosphotyrosine modification is found at Tyr-638. The active-site Proton acceptor is Asp-690. Ser-724 is subject to Phosphoserine. 2 positions are modified to phosphothreonine: Thr-725 and Thr-730. Position 738 is a phosphotyrosine (Tyr-738).

It belongs to the protein kinase superfamily. Ser/Thr protein kinase family.

It is found in the membrane. It carries out the reaction L-seryl-[protein] + ATP = O-phospho-L-seryl-[protein] + ADP + H(+). The catalysed reaction is L-threonyl-[protein] + ATP = O-phospho-L-threonyl-[protein] + ADP + H(+). In Arabidopsis thaliana (Mouse-ear cress), this protein is Probable LRR receptor-like serine/threonine-protein kinase At1g51880.